A 496-amino-acid polypeptide reads, in one-letter code: Chaperone SurA (496 aa).

A signal peptide spans Met1 to Ala42. The disordered stretch occupies residues Arg53–Gly80. PpiC domains follow at residues Val235–Asp337 and Val349–Gly447.

It localises to the periplasm. It carries out the reaction [protein]-peptidylproline (omega=180) = [protein]-peptidylproline (omega=0). Its function is as follows. Chaperone involved in the correct folding and assembly of outer membrane proteins. Recognizes specific patterns of aromatic residues and the orientation of their side chains, which are found more frequently in integral outer membrane proteins. May act in both early periplasmic and late outer membrane-associated steps of protein maturation. The polypeptide is Chaperone SurA (Ralstonia nicotianae (strain ATCC BAA-1114 / GMI1000) (Ralstonia solanacearum)).